The sequence spans 444 residues: Xylose isomerase (444 aa).

The Mg(2+) site is built by aspartate 307 and aspartate 309.

This sequence belongs to the xylose isomerase family. Homotetramer. Requires Mg(2+) as cofactor.

It localises to the cytoplasm. It carries out the reaction alpha-D-xylose = alpha-D-xylulofuranose. The chain is Xylose isomerase from Thermotoga neapolitana (strain ATCC 49049 / DSM 4359 / NBRC 107923 / NS-E).